Here is a 429-residue protein sequence, read N- to C-terminus: Protein ABERRANT PANICLE ORGANIZATION 1 (429 aa).

The segment covering 1–11 has biased composition (pro residues); it reads MMNPRRLPPLP. Residues 1–21 are disordered; the sequence is MMNPRRLPPLPSSTSSASAAD. Positions 25–71 constitute an F-box domain; sequence PRVWRRLPQPLVDRILACLPTPSFLRLRAACRRFYHLLFSSPFLHSH. The next 2 helical transmembrane spans lie at 72-92 and 112-132; these read LLLS…GHLL and VAGG…LAFL. Kelch repeat units follow at residues 229–277, 284–339, and 350–397; these read MAFA…ELGG, RVAL…AEGG, and YVVL…GAAG.

Part of a putative SCF (ASK/Cullin/F-box) ubiquitin ligase complex. Interacts with FL/APO2. As to expression, expressed in apical meristems and the lateral organ primordia throughout development. Expressed in seedlings, roots, leaves, shoot apical meristem (SAM), developing panicles, and, at lower levels, in developing seeds.

Its subcellular location is the membrane. It participates in protein modification; protein ubiquitination. Functionally, component of SCF(ASK-cullin-F-box) E3 ubiquitin ligase complexes, which may mediate the ubiquitination and subsequent proteasomal degradation of target proteins. Together with FL/APO2, involved in the temporal regulation of meristem identity during both vegetative and reproductive developments in an APO2-dependent manner. Promotes spikelet formation by suppressing the precocious conversion of inflorescence meristems to spikelet meristems, probably via a positive regulation of class-C floral homeotic genes, but not of class-B genes, and through the control of cell proliferation in meristems. Mediates culm development and strength/diameter enhancement at internodes. Required for the regulation of the plastochron, floral organ identity, and floral determinacy. Controls the number of primary rachis branches (PRBs). May trigger the formation of vascular bundle systems which, consequently, promote carbohydrate translocation to panicles. Involved in ozone-induced grain yield regulation. The sequence is that of Protein ABERRANT PANICLE ORGANIZATION 1 from Oryza sativa subsp. japonica (Rice).